Consider the following 412-residue polypeptide: Candidapepsin-2 (412 aa).

Positions 1-25 (MTTIAIFTKNVLLAIAFALFAQGAA) form a signal peptide, or 18, or 21. Positions 26–61 (IPDPAKRDDNPGFVALDFEVTRKPLDVNATSELSKR) are cleaved as a propeptide — activation peptide. N-linked (GlcNAc...) asparagine glycosylation is present at asparagine 53. The region spanning 75 to 383 (YGIRVSVGSN…LDKETVLSRS (309 aa)) is the Peptidase A1 domain. The active site involves aspartate 93. Cysteine 108 and cysteine 113 are disulfide-bonded. The active site involves aspartate 273. The cysteines at positions 311 and 345 are disulfide-linked.

The protein belongs to the peptidase A1 family. Post-translationally, O-glycosylated.

The protein resides in the secreted. The enzyme catalyses Preferential cleavage at the carboxyl of hydrophobic amino acids, but fails to cleave 15-Leu-|-Tyr-16, 16-Tyr-|-Leu-17 and 24-Phe-|-Phe-25 of insulin B chain. Activates trypsinogen, and degrades keratin.. This chain is Candidapepsin-2 (SAPP2), found in Candida parapsilosis (Yeast).